Reading from the N-terminus, the 1939-residue chain is Myosin-4 (1939 aa).

Positions 33–82 constitute a Myosin N-terminal SH3-like domain; that stretch reads DAKSSVFVVDAKESYVKATVQSREGGKVTAKTEGGATVTVKDDQVFSMNP. Phosphoserine is present on serine 36. 2 positions are modified to phosphothreonine: threonine 64 and threonine 69. At serine 79 the chain carries Phosphoserine. One can recognise a Myosin motor domain in the interval 86–782; the sequence is DKIEDMAMMT…LLGTLEEMRD (697 aa). An N6,N6,N6-trimethyllysine modification is found at lysine 130. Residue 179–186 coordinates ATP; it reads GESGAGKT. Tyrosine 389 carries the post-translational modification Phosphotyrosine. Residue threonine 391 is modified to Phosphothreonine. The residue at position 392 (serine 392) is a Phosphoserine. Threonine 419 carries the post-translational modification Phosphothreonine. The residue at position 424 (tyrosine 424) is a Phosphotyrosine. Serine 625 carries the phosphoserine modification. The actin-binding stretch occupies residues 659–681; sequence LNKLMTNLKSTHPHFVRCLIPNE. Histidine 757 is modified (pros-methylhistidine). Residues 761–775 form an actin-binding region; it reads KFGHTKVFFKAGLLG. Threonine 776 bears the Phosphothreonine mark. Residues 785–814 form the IQ domain; that stretch reads LAQLITRTQAVCRGYLMRVEFKKMMERRES. Residues 843–1939 are a coiled coil; it reads LLKSAETEKE…EVHTKVISEE (1097 aa). Residues serine 1092 and serine 1096 each carry the phosphoserine modification. 2 disordered regions span residues 1128 to 1147 and 1153 to 1172; these read AERA…SREL and RLEE…KKRE. Residues serine 1162 and serine 1237 each carry the phosphoserine modification. Position 1241 is a phosphothreonine (threonine 1241). Serine 1243 is subject to Phosphoserine. Threonine 1255 is subject to Phosphothreonine. Phosphoserine is present on serine 1261. The residue at position 1265 (threonine 1265) is a Phosphothreonine. A disordered region spans residues 1276-1299; the sequence is ELSTQKARLHTESGEFSRQLDEKD. Serine 1278 carries the post-translational modification Phosphoserine. The segment covering 1284–1299 has biased composition (basic and acidic residues); that stretch reads LHTESGEFSRQLDEKD. Threonine 1286 is subject to Phosphothreonine. A phosphoserine mark is found at serine 1288, serine 1292, serine 1303, serine 1306, and serine 1413. Phosphotyrosine is present on tyrosine 1464. A Phosphothreonine modification is found at threonine 1467. The residue at position 1474 (serine 1474) is a Phosphoserine. Phosphotyrosine is present on tyrosine 1492. Serine 1495 carries the phosphoserine modification. Threonine 1501 is subject to Phosphothreonine. Serine 1514 is subject to Phosphoserine. Threonine 1517 is modified (phosphothreonine). Phosphoserine occurs at positions 1542, 1547, 1554, 1574, 1600, 1603, 1714, and 1726. Threonine 1730 and threonine 1736 each carry phosphothreonine. At serine 1739 the chain carries Phosphoserine.

This sequence belongs to the TRAFAC class myosin-kinesin ATPase superfamily. Myosin family. In terms of assembly, muscle myosin is a hexameric protein that consists of 2 heavy chain subunits (MHC), 2 alkali light chain subunits (MLC) and 2 regulatory light chain subunits (MLC-2). In terms of tissue distribution, expressed in type 2b myofibers in the tibialis anterior muscle (at protein level).

The protein localises to the cytoplasm. It localises to the myofibril. Its function is as follows. Muscle contraction. The chain is Myosin-4 (Myh4) from Mus musculus (Mouse).